Consider the following 484-residue polypeptide: Sushi domain-containing protein 4 (484 aa).

A signal peptide spans 1-35 (MFHHADKGGKKSAFGHPVCGQIILSIILLRPPLLV). 4 consecutive Sushi domains span residues 46–110 (QICK…VCLS), 111–168 (EDCL…QPTC), 169–230 (QGCL…RCLD), and 232–295 (EACS…YCVK). 8 cysteine pairs are disulfide-bonded: C48-C90, C76-C108, C113-C156, C138-C168, C171-C215, C201-C228, C234-C280, and C265-C293. N-linked (GlcNAc...) asparagine glycosylation is found at N95 and N125. N-linked (GlcNAc...) asparagine glycosylation occurs at N183. Residues 311 to 331 (WKVVACTATSVLLALLLVITA) traverse the membrane as a helical segment. Positions 374 to 484 (SGNYCQPPND…PLVEDGEEDC (111 aa)) are disordered. Composition is skewed to polar residues over residues 424-442 (DSLS…SSSH) and 449-467 (SEKT…TSPS). The segment covering 470 to 484 (IADEIPLVEDGEEDC) has biased composition (acidic residues).

It is found in the membrane. The sequence is that of Sushi domain-containing protein 4 (susd4) from Danio rerio (Zebrafish).